Here is a 548-residue protein sequence, read N- to C-terminus: MENREDLNSILPYLPLVIRSSSLYWPPRVVEALKAMSEGPSHSQVDSGEVLRQAIFDMRRSLSFSTLEPSASNGYAFLFDELIDEKESKRWFDEIIPALASLLLQFPSLLEVHFQNADNIVSGIKTGLRLLNSQQAGIVFLSQELIGALLACSFFCLFPDDNRGAKHLPVINFDHLFASLYISYSQSQESKIRCIMHYFERFCSCVPIGIVSFERKITAAPDADFWSKSDVSLCAFKVHSFGLIEDQPDNALEVDFANKYLGGGSLSRGCVQEEIRFMINPELIAGMLFLPRMDDNEAIEIVGAERFSCYTGYASSFRFAGEYIDKKAMDPFKRRRTRIVAIDALCTPKMRHFKDICLLREINKALCGFLNCSKAWEHQNIFMDEGDNEIQLVRNGRDSGLLRTETTASHRTPLNDVEMNREKPANNLIRDFYVEGVDNEDHEDDGVATGNWGCGVFGGDPELKATIQWLAASQTRRPFISYYTFGVEALRNLDQVTKWILSHKWTVGDLWNMMLEYSAQRLYKQTSVGFFSWLLPSLATTNKAIQPP.

It belongs to the poly(ADP-ribose) glycohydrolase family.

It catalyses the reaction [(1''-&gt;2')-ADP-alpha-D-ribose](n) + H2O = [(1''-&gt;2')-ADP-alpha-D-ribose](n-1) + ADP-D-ribose. Poly(ADP-ribose) synthesized after DNA damage is only present transiently and is rapidly degraded by poly(ADP-ribose) glycohydrolase. Involved in establishing period length of the circadian oscillator. May regulate post-translational poly(ADP-ribosyl)ation of an oscillator component. The sequence is that of Poly(ADP-ribose) glycohydrolase 1 (PARG1) from Arabidopsis thaliana (Mouse-ear cress).